Consider the following 323-residue polypeptide: tRNA dimethylallyltransferase (323 aa).

32 to 39 (GPTASGKS) provides a ligand contact to ATP. Residue 34 to 39 (TASGKS) participates in substrate binding. The interaction with substrate tRNA stretch occupies residues 57 to 60 (DSMQ).

The protein belongs to the IPP transferase family. Monomer. The cofactor is Mg(2+).

It carries out the reaction adenosine(37) in tRNA + dimethylallyl diphosphate = N(6)-dimethylallyladenosine(37) in tRNA + diphosphate. Functionally, catalyzes the transfer of a dimethylallyl group onto the adenine at position 37 in tRNAs that read codons beginning with uridine, leading to the formation of N6-(dimethylallyl)adenosine (i(6)A). This Rhodopseudomonas palustris (strain BisB5) protein is tRNA dimethylallyltransferase.